The chain runs to 107 residues: Pyrimidine/purine nucleoside phosphorylase (107 aa).

Belongs to the nucleoside phosphorylase PpnP family.

It catalyses the reaction a purine D-ribonucleoside + phosphate = a purine nucleobase + alpha-D-ribose 1-phosphate. It carries out the reaction adenosine + phosphate = alpha-D-ribose 1-phosphate + adenine. The enzyme catalyses cytidine + phosphate = cytosine + alpha-D-ribose 1-phosphate. The catalysed reaction is guanosine + phosphate = alpha-D-ribose 1-phosphate + guanine. It catalyses the reaction inosine + phosphate = alpha-D-ribose 1-phosphate + hypoxanthine. It carries out the reaction thymidine + phosphate = 2-deoxy-alpha-D-ribose 1-phosphate + thymine. The enzyme catalyses uridine + phosphate = alpha-D-ribose 1-phosphate + uracil. The catalysed reaction is xanthosine + phosphate = alpha-D-ribose 1-phosphate + xanthine. Its function is as follows. Catalyzes the phosphorolysis of diverse nucleosides, yielding D-ribose 1-phosphate and the respective free bases. Can use uridine, adenosine, guanosine, cytidine, thymidine, inosine and xanthosine as substrates. Also catalyzes the reverse reactions. This Aromatoleum aromaticum (strain DSM 19018 / LMG 30748 / EbN1) (Azoarcus sp. (strain EbN1)) protein is Pyrimidine/purine nucleoside phosphorylase.